Reading from the N-terminus, the 286-residue chain is Bifunctional protein FolD (286 aa).

NADP(+)-binding positions include 165-167 (GRS), Ser190, and Val231.

Belongs to the tetrahydrofolate dehydrogenase/cyclohydrolase family. In terms of assembly, homodimer.

It catalyses the reaction (6R)-5,10-methylene-5,6,7,8-tetrahydrofolate + NADP(+) = (6R)-5,10-methenyltetrahydrofolate + NADPH. The catalysed reaction is (6R)-5,10-methenyltetrahydrofolate + H2O = (6R)-10-formyltetrahydrofolate + H(+). The protein operates within one-carbon metabolism; tetrahydrofolate interconversion. Functionally, catalyzes the oxidation of 5,10-methylenetetrahydrofolate to 5,10-methenyltetrahydrofolate and then the hydrolysis of 5,10-methenyltetrahydrofolate to 10-formyltetrahydrofolate. The polypeptide is Bifunctional protein FolD (Bacillus cereus (strain B4264)).